The primary structure comprises 179 residues: Large ribosomal subunit protein uL6 (179 aa).

The protein belongs to the universal ribosomal protein uL6 family. Part of the 50S ribosomal subunit.

Functionally, this protein binds to the 23S rRNA, and is important in its secondary structure. It is located near the subunit interface in the base of the L7/L12 stalk, and near the tRNA binding site of the peptidyltransferase center. The sequence is that of Large ribosomal subunit protein uL6 from Leptospira borgpetersenii serovar Hardjo-bovis (strain JB197).